Reading from the N-terminus, the 113-residue chain is Ig heavy chain V-III region A4 (113 aa).

The Ig-like domain maps to 1-113; that stretch reads EVKLEESGGG…YWGQGTLVTV (113 aa). Cysteine 22 and cysteine 98 are disulfide-bonded.

The chain is Ig heavy chain V-III region A4 from Mus musculus (Mouse).